An 860-amino-acid polypeptide reads, in one-letter code: Alpha,alpha-trehalose-phosphate synthase [UDP-forming] 6 (860 aa).

The residue at position 5 (serine 5) is a Phosphoserine. A glycosyltransferase region spans residues 53–557 (DRIIIVANEL…ARSFLQDLER (505 aa)).

In the N-terminal section; belongs to the glycosyltransferase 20 family. This sequence in the C-terminal section; belongs to the trehalose phosphatase family. Binds to the phosphopeptide-binding site of GRF/14-3-3. Post-translationally, phosphorylated. As to expression, expressed in seedlings, leaves, stems, flowers, siliques and roots.

It catalyses the reaction D-glucose 6-phosphate + UDP-alpha-D-glucose = alpha,alpha-trehalose 6-phosphate + UDP + H(+). Regulates plant architecture, shape of epidermal pavement cells and branching of trichomes. In Arabidopsis thaliana (Mouse-ear cress), this protein is Alpha,alpha-trehalose-phosphate synthase [UDP-forming] 6.